The primary structure comprises 957 residues: Atromentin synthetase (957 aa).

The adenylation (A) domain stretch occupies residues 59–464; it reads SVQARTFQDF…SGRIKDTVIV (406 aa). One can recognise a Carrier domain in the interval 596–674; the sequence is TPSTDDEKAL…DLAKYVNGLV (79 aa). A thiolation and peptide carrier (T) domain region spans residues 601-671; it reads DEKALAAIYA…IVSDLAKYVN (71 aa). Ser633 is subject to O-(pantetheine 4'-phosphoryl)serine. The interval 697–947 is thioesterase (TE) domain; it reads PIFFVHPGVG…FDHVPQFQKI (251 aa).

This sequence belongs to the ATP-dependent AMP-binding enzyme family.

It functions in the pathway secondary metabolite biosynthesis. In terms of biological role, the L-tyrosine:2-oxoglutarate aminotransferase atrD and the atromentin synthetase atrA catalyze consecutive steps to turn over L-tyrosine into atromentin, which represents the generic precursor molecule for the entire terphenylquinone and pulvinic acid family of pigments, which are widely distributed secondary metabolites in homobasidiomycetes. The first step is catalyzed by atrD which converts L-tyrosine in to 4-hydroxyphenylpyruvate (4-HPP). Adenylation of two 4-HPP monomers by the atrA adenylation (A) domain, ester bond formation between monomers and atrA, and symmetric C-C-bond formation between two monomers by atrA leads to atromentin. The polypeptide is Atromentin synthetase (Tapinella panuoides (Oyster rollrim mushroom)).